Reading from the N-terminus, the 569-residue chain is Synaptotagmin-4 (569 aa).

Residues 1-21 form a helical membrane-spanning segment; the sequence is MGFLFGLFIGIAVSFGLVVAF. The region spanning 67-251 is the SMP-LTD domain; sequence QRQKLNWLNL…WPVRKIIPIL (185 aa). The tract at residues 229-531 is phospholipid binding; sequence EETIRDAIED…KIGRVIMTLT (303 aa). 2 C2 domains span residues 245-366 and 426-543; these read RKII…DIWL and TDMK…QEWF. Residues Asp459, Asp465, Asp514, Asp516, and Asp521 each contribute to the Ca(2+) site.

Belongs to the synaptotagmin family. Requires Ca(2+) as cofactor.

The protein localises to the membrane. Its function is as follows. May be involved in membrane trafficking. In Arabidopsis thaliana (Mouse-ear cress), this protein is Synaptotagmin-4 (SYT4).